We begin with the raw amino-acid sequence, 729 residues long: 1,4-alpha-glucan branching enzyme GlgB (729 aa).

D407 serves as the catalytic Nucleophile. E460 (proton donor) is an active-site residue.

The protein belongs to the glycosyl hydrolase 13 family. GlgB subfamily. As to quaternary structure, monomer.

It catalyses the reaction Transfers a segment of a (1-&gt;4)-alpha-D-glucan chain to a primary hydroxy group in a similar glucan chain.. It participates in glycan biosynthesis; glycogen biosynthesis. Its function is as follows. Catalyzes the formation of the alpha-1,6-glucosidic linkages in glycogen by scission of a 1,4-alpha-linked oligosaccharide from growing alpha-1,4-glucan chains and the subsequent attachment of the oligosaccharide to the alpha-1,6 position. The sequence is that of 1,4-alpha-glucan branching enzyme GlgB from Pseudoalteromonas atlantica (strain T6c / ATCC BAA-1087).